Here is a 287-residue protein sequence, read N- to C-terminus: Probable endonuclease 4 (287 aa).

Zn(2+) is bound by residues His-69, His-109, Glu-144, Asp-178, His-181, His-215, Asp-228, His-230, and Glu-260.

It belongs to the AP endonuclease 2 family. Requires Zn(2+) as cofactor.

The catalysed reaction is Endonucleolytic cleavage to 5'-phosphooligonucleotide end-products.. Functionally, endonuclease IV plays a role in DNA repair. It cleaves phosphodiester bonds at apurinic or apyrimidinic (AP) sites, generating a 3'-hydroxyl group and a 5'-terminal sugar phosphate. This chain is Probable endonuclease 4, found in Thermotoga petrophila (strain ATCC BAA-488 / DSM 13995 / JCM 10881 / RKU-1).